A 309-amino-acid polypeptide reads, in one-letter code: Olfactory receptor 5AC2 (309 aa).

Topologically, residues 1-27 are extracellular; it reads MDISEGNKTLVTEFVLTGLTDRPWLHV. Asparagine 7 carries N-linked (GlcNAc...) asparagine glycosylation. The helical transmembrane segment at 28–48 threads the bilayer; that stretch reads LFFVVFLVVYLITMVGNLGLI. The Cytoplasmic segment spans residues 49–56; sequence VLIWNDPH. Residues 57–77 form a helical membrane-spanning segment; the sequence is LHMPMYLFLGGLAFSDACTST. Residues 78–101 lie on the Extracellular side of the membrane; that stretch reads SITPRMLVNFLDKTAMISLAECIT. Residues cysteine 99 and cysteine 191 are joined by a disulfide bond. A helical membrane pass occupies residues 102–122; sequence QFYFFASSATTECFLLVMMAY. The Cytoplasmic segment spans residues 123–135; sequence DRYVAICNPLLYP. Residues 136 to 156 form a helical membrane-spanning segment; that stretch reads VMMSNKLSAQLLSISYVIGFL. The Extracellular portion of the chain corresponds to 157–198; the sequence is HPLVHVSLLLRLTFCRFNIIHYFYCEILQLFKISCNGPSINA. Residues 199–219 traverse the membrane as a helical segment; sequence LMIFIFGAFIQIPTLMTIIIS. Residues 220–239 lie on the Cytoplasmic side of the membrane; sequence YTRVLFDILKKKSEKGRSKA. Residues 240-260 form a helical membrane-spanning segment; that stretch reads FSTCGAHLLSVSLYYGTLIFM. The Extracellular portion of the chain corresponds to 261–273; sequence YVRPASGLAEDQD. The chain crosses the membrane as a helical span at residues 274–294; sequence KVYSLFYTIIIPLLNPFIYSL. Over 295–309 the chain is Cytoplasmic; the sequence is RNKKVMHALRRVIRK.

This sequence belongs to the G-protein coupled receptor 1 family.

Its subcellular location is the cell membrane. In terms of biological role, odorant receptor. In Homo sapiens (Human), this protein is Olfactory receptor 5AC2 (OR5AC2).